The primary structure comprises 138 residues: Large ribosomal subunit protein uL16 (138 aa).

It belongs to the universal ribosomal protein uL16 family. As to quaternary structure, part of the 50S ribosomal subunit.

Functionally, binds 23S rRNA and is also seen to make contacts with the A and possibly P site tRNAs. This Chlamydia felis (strain Fe/C-56) (Chlamydophila felis) protein is Large ribosomal subunit protein uL16.